Here is a 555-residue protein sequence, read N- to C-terminus: CTP synthase (555 aa).

An amidoligase domain region spans residues 1 to 270 (MTKFVFVTGG…DGLICDKLRL (270 aa)). Ser-13 contributes to the CTP binding site. A UTP-binding site is contributed by Ser-13. Residues 14–19 (SLGKGI) and Asp-71 each bind ATP. Residues Asp-71 and Glu-144 each contribute to the Mg(2+) site. CTP is bound by residues 151–153 (DIE), 191–196 (KTKPTQ), and Lys-227. UTP is bound by residues 191–196 (KTKPTQ) and Lys-227. A Glutamine amidotransferase type-1 domain is found at 295–547 (NIVMVGKYVE…IKAALDHQAA (253 aa)). Gly-356 is an L-glutamine binding site. Cys-383 serves as the catalytic Nucleophile; for glutamine hydrolysis. Residues 384–387 (LGMQ), Glu-407, and Arg-473 contribute to the L-glutamine site. Residues His-520 and Glu-522 contribute to the active site.

The protein belongs to the CTP synthase family. Homotetramer.

The enzyme catalyses UTP + L-glutamine + ATP + H2O = CTP + L-glutamate + ADP + phosphate + 2 H(+). It catalyses the reaction L-glutamine + H2O = L-glutamate + NH4(+). It carries out the reaction UTP + NH4(+) + ATP = CTP + ADP + phosphate + 2 H(+). It functions in the pathway pyrimidine metabolism; CTP biosynthesis via de novo pathway; CTP from UDP: step 2/2. With respect to regulation, allosterically activated by GTP, when glutamine is the substrate; GTP has no effect on the reaction when ammonia is the substrate. The allosteric effector GTP functions by stabilizing the protein conformation that binds the tetrahedral intermediate(s) formed during glutamine hydrolysis. Inhibited by the product CTP, via allosteric rather than competitive inhibition. In terms of biological role, catalyzes the ATP-dependent amination of UTP to CTP with either L-glutamine or ammonia as the source of nitrogen. Regulates intracellular CTP levels through interactions with the four ribonucleotide triphosphates. The chain is CTP synthase from Albidiferax ferrireducens (strain ATCC BAA-621 / DSM 15236 / T118) (Rhodoferax ferrireducens).